Reading from the N-terminus, the 383-residue chain is MPLSLFRRLLLAALLLVIIWTLFGPSGIGEELLSLSLASLSPAPASPGPPLALPRLLIPNEKACGGPGSPPFLLILVCTAPENLNQRNAIRASWGGLREAQGFRVQILFLLGEPSLWHPTKEPHDIDLVREAAAQGDILQAAFRDSYRNLTLKTLSGLNWADKHCSMARYILKTDDDVFVNVPELVSELIRRGGHWEQWEKGKEPPRAVKAGDKEWEERPILKSQPMPLLYLGRVHWRVHPSRTPGSKHQISEEQWPPTWGPFPPYASGTGYVLSASAVQLILKVASRAPPLPLEDVFVGVSARRGGLTPTHCVKLAGATHYPLDRCCYGKFLLTSHKLDPWKMQEAWKLVGGSDGERTAPFCSWLQEVLGILRCRVIAWLHS.

At 1-8 (MPLSLFRR) the chain is on the cytoplasmic side. The chain crosses the membrane as a helical span at residues 9–29 (LLLAALLLVIIWTLFGPSGIG). Residues 30-383 (EELLSLSLAS…RCRVIAWLHS (354 aa)) lie on the Lumenal side of the membrane. Asn149 carries an N-linked (GlcNAc...) asparagine glycan.

The protein belongs to the glycosyltransferase 31 family.

Its subcellular location is the golgi apparatus membrane. The catalysed reaction is a ganglioside GM2 (d18:1(4E)) + UDP-alpha-D-galactose = a ganglioside GM1 (d18:1(4E)) + UDP + H(+). It carries out the reaction a ganglioside GM2 + UDP-alpha-D-galactose = a ganglioside GM1 + UDP + H(+). The enzyme catalyses a ganglioside GD2 (d18:1(4E)) + UDP-alpha-D-galactose = a ganglioside GD1b (d18:1(4E)) + UDP + H(+). It catalyses the reaction a ganglioside GA2 (d18:1(4E)) + UDP-alpha-D-galactose = a ganglioside GA1 (d18:1(4E)) + UDP + H(+). It participates in protein modification; protein glycosylation. In terms of biological role, involved in GM1/GD1B/GA1 ganglioside biosynthesis. The chain is Beta-1,3-galactosyltransferase 4 (B3GALT4) from Canis lupus familiaris (Dog).